Here is a 477-residue protein sequence, read N- to C-terminus: MFPVFPCTLLAPPFPVLGLDSRGVGGLMNSFPPPQGHAQNPLQVGAELQSRFFASQGCAQSPFQAAPAPPPTPQAPAAEPLQVDLLPVLAAAQESAAAAAAAAAAAAAVAAAPPAPAAASTVDTAALKQPPAPPPPPPPVSAPAAEAAPPASAATIAAAAATAVVAPTSTVAVAPVASALEKKTKSKGPYICALCAKEFKNGYNLRRHEAIHTGAKAGRVPSGAMKMPTMVPLSLLSVPQLSGAGGGGGEAGAGGGAAAVAAGGVVTTTASGKRIRKNHACEMCGKAFRDVYHLNRHKLSHSDEKPYQCPVCQQRFKRKDRMSYHVRSHDGAVHKPYNCSHCGKSFSRPDHLNSHVRQVHSTERPFKCEKCEAAFATKDRLRAHTVRHEEKVPCHVCGKMLSSAYISDHMKVHSQGPHHVCELCNKGTGEVCPMAAAAAAAAAAAAAAVAAPPTAVGSLSGAEGVPVSSQPLPSQPW.

2 disordered regions span residues 59 to 78 (AQSP…APAA) and 121 to 146 (TVDT…PAAE). Pro residues predominate over residues 130–141 (PPAPPPPPPPVS). 4 consecutive C2H2-type zinc fingers follow at residues 190-212 (YICA…EAIH), 279-301 (HACE…KLSH), 307-329 (YQCP…VRSH), and 337-360 (YNCS…RQVH). Serine 361 bears the Phosphoserine mark. The C2H2-type 5 zinc finger occupies 366–388 (FKCEKCEAAFATKDRLRAHTVRH). The C2H2-type 6; atypical zinc finger occupies 392–413 (VPCHVCGKMLSSAYISDHMKVH).

As to quaternary structure, interacts with BPTF. Forms a heterodimer with MAZ isoform 2; the interaction inhibits MAZ isoform 1-mediated transcription activation. In terms of assembly, forms a heterodimer with MAZ isoform 1; the interaction inhibits MAZ isoform 1-mediated transcription activation. Present in kidney, liver and brain. In the brain, highest levels are found in motor cortex and midfrontal cortex (at protein level). As to expression, expressed in the heart, brain, placenta, lung, liver, skeletal muscle and weakly expressed in the kidney. Expressed in the joint synovium.

The protein resides in the nucleus. Functionally, transcriptional regulator, potentially with dual roles in transcription initiation and termination. Its function is as follows. Binds DNA and functions as a transcriptional activator. Binds to two G/A-rich sites, ME1a1 and ME1a2, within the MYC promoter having greater affinity for the former. Also binds to multiple G/C-rich sites within the promoter of the Sp1 family of transcription factors. Binds DNA and functions as a transcriptional activator. Inhibits MAZ isoform 1-mediated transcription. In terms of biological role, binds DNA and functions as a transcriptional activator. This Homo sapiens (Human) protein is Myc-associated zinc finger protein (MAZ).